The primary structure comprises 56 residues: MASKGGREKIKLESTAGTGHFYTTNKNKKTTPEKLEFMKFDPKVRKHVLYKEVKLR.

A compositionally biased stretch (basic and acidic residues) spans 1–12 (MASKGGREKIKL). The disordered stretch occupies residues 1–27 (MASKGGREKIKLESTAGTGHFYTTNKN).

It belongs to the bacterial ribosomal protein bL33 family.

This Leptothrix cholodnii (strain ATCC 51168 / LMG 8142 / SP-6) (Leptothrix discophora (strain SP-6)) protein is Large ribosomal subunit protein bL33.